Consider the following 77-residue polypeptide: Large ribosomal subunit protein uL29 (77 aa).

The protein belongs to the universal ribosomal protein uL29 family.

The sequence is that of Large ribosomal subunit protein uL29 from Methanopyrus kandleri (strain AV19 / DSM 6324 / JCM 9639 / NBRC 100938).